The following is a 124-amino-acid chain: Putative iron-sulfur cluster insertion protein ErpA (124 aa).

Positions 52, 116, and 118 each coordinate iron-sulfur cluster.

The protein belongs to the HesB/IscA family. In terms of assembly, homodimer. Iron-sulfur cluster is required as a cofactor.

Required for insertion of 4Fe-4S clusters. The protein is Putative iron-sulfur cluster insertion protein ErpA of Delftia acidovorans (strain DSM 14801 / SPH-1).